Consider the following 565-residue polypeptide: Putative pentatricopeptide repeat-containing protein At3g05240 (565 aa).

PPR repeat units follow at residues 37 to 70, 71 to 105, 106 to 140, 141 to 171, 172 to 206, 207 to 241, 250 to 280, 281 to 315, 316 to 350, 351 to 381, 382 to 416, 418 to 448, and 454 to 484; these read NVIP…IDCP, SVYI…GYSP, DYFT…GFEV, NMYV…IPQW, NVVA…GVKA, NETI…GFDP, NVIL…MPER, TLVS…GIAP, DKVT…GFVK, DAAI…LEKK, DTIA…GNAT, DGIT…MRDL, and TVEH…MPVK. Residues 489-564 form a type E motif region; the sequence is IWGALLNGCD…VLGHSSVETM (76 aa).

The protein belongs to the PPR family. PCMP-E subfamily.

The chain is Putative pentatricopeptide repeat-containing protein At3g05240 (PCMP-E82) from Arabidopsis thaliana (Mouse-ear cress).